Here is a 178-residue protein sequence, read N- to C-terminus: Crossover junction endodeoxyribonuclease RuvC (178 aa).

Active-site residues include aspartate 7, glutamate 68, and aspartate 141. Mg(2+) is bound by residues aspartate 7, glutamate 68, and aspartate 141.

It belongs to the RuvC family. As to quaternary structure, homodimer which binds Holliday junction (HJ) DNA. The HJ becomes 2-fold symmetrical on binding to RuvC with unstacked arms; it has a different conformation from HJ DNA in complex with RuvA. In the full resolvosome a probable DNA-RuvA(4)-RuvB(12)-RuvC(2) complex forms which resolves the HJ. It depends on Mg(2+) as a cofactor.

It localises to the cytoplasm. The catalysed reaction is Endonucleolytic cleavage at a junction such as a reciprocal single-stranded crossover between two homologous DNA duplexes (Holliday junction).. Its function is as follows. The RuvA-RuvB-RuvC complex processes Holliday junction (HJ) DNA during genetic recombination and DNA repair. Endonuclease that resolves HJ intermediates. Cleaves cruciform DNA by making single-stranded nicks across the HJ at symmetrical positions within the homologous arms, yielding a 5'-phosphate and a 3'-hydroxyl group; requires a central core of homology in the junction. The consensus cleavage sequence is 5'-(A/T)TT(C/G)-3'. Cleavage occurs on the 3'-side of the TT dinucleotide at the point of strand exchange. HJ branch migration catalyzed by RuvA-RuvB allows RuvC to scan DNA until it finds its consensus sequence, where it cleaves and resolves the cruciform DNA. The chain is Crossover junction endodeoxyribonuclease RuvC from Parafrankia sp. (strain EAN1pec).